A 303-amino-acid chain; its full sequence is Probable cell division protein WhiA (303 aa).

The H-T-H motif DNA-binding region spans 272–303 (SIQQVADALEFPITKSGVNHRLRKINKIADDL).

It belongs to the WhiA family.

Functionally, involved in cell division and chromosome segregation. The chain is Probable cell division protein WhiA from Streptococcus pyogenes serotype M1.